Consider the following 664-residue polypeptide: Intraflagellar transport protein 70A (664 aa).

7 TPR repeats span residues 11–44 (DGEF…SPRS), 45–78 (RAGL…HPEL), 153–186 (LDGQ…SGYR), 188–220 (DLSY…GIRQ), 392–423 (LTKQ…EKYI), 424–456 (PVLM…CNDH), and 458–491 (VWKL…HYDN). Positions 507-534 (YIMTSQNEEAEELMRKIEKEEEQLSYDD) form a coiled coil. One copy of the TPR 8 repeat lies at 543-576 (CIVNLVIGTLYCAKGNYDFGISRVIKSLEPYNKK).

Belongs to the TTC30/dfy-1/fleer family.

The protein resides in the cell projection. It is found in the cilium. Required for polyglutamylation of axonemal tubulin. Plays a role in anterograde intraflagellar transport (IFT), the process by which cilia precursors are transported from the base of the cilium to the site of their incorporation at the tip. The chain is Intraflagellar transport protein 70A (IFT70A) from Bos taurus (Bovine).